The sequence spans 328 residues: tRNA uridine(34) hydroxylase (328 aa).

In terms of domain architecture, Rhodanese spans 130-224; that stretch reads LDEDTVVLDT…YGKDPEVQGE (95 aa). Residue Cys-184 is the Cysteine persulfide intermediate of the active site.

The protein belongs to the TrhO family.

It catalyses the reaction uridine(34) in tRNA + AH2 + O2 = 5-hydroxyuridine(34) in tRNA + A + H2O. Functionally, catalyzes oxygen-dependent 5-hydroxyuridine (ho5U) modification at position 34 in tRNAs. This chain is tRNA uridine(34) hydroxylase, found in Streptococcus pyogenes serotype M12 (strain MGAS2096).